The following is a 165-amino-acid chain: Protein NKG7 (165 aa).

4 consecutive transmembrane segments (helical) span residues 9–29 (LFAG…DFWI), 61–81 (FCIL…LSCI), 92–112 (LVST…MAVY), and 133–153 (FYLG…SLGA).

This sequence belongs to the PMP-22/EMP/MP20 family. As to expression, predominantly expressed by leukocytes with cytotoxic activity such as CD8(+) T-cells and natural killer cells.

The protein localises to the cell membrane. It is found in the cytolytic granule membrane. Functionally, regulates cytotoxic granule exocytosis in effector lymphocytes, thus acting as a critical mediator of inflammation in a broad range of infectious and non-infectious diseases. Essential for cytotoxic degranulation of natural killer (NK) cells and CD8(+) T-cells and for the activation of CD4(+) T-cells following infection. Plays a critical role in CD8(+) T-cell and NK cell-mediated cytolysis of target cells and contributes to the cytolytic activity via the perforin/granzyme pathway by enhancing exocytosis of LAMP1-carrying lytic granules. Contributes to NK cell-mediated control of cancer metastasis. This is Protein NKG7 (Nkg7) from Mus musculus (Mouse).